A 139-amino-acid chain; its full sequence is UPF0251 protein Csac_0224 (139 aa).

The protein belongs to the UPF0251 family.

The polypeptide is UPF0251 protein Csac_0224 (Caldicellulosiruptor saccharolyticus (strain ATCC 43494 / DSM 8903 / Tp8T 6331)).